A 422-amino-acid chain; its full sequence is Alcohol dehydrogenase 4 (422 aa).

The transit peptide at methionine 1 to serine 29 directs the protein to the mitochondrion. Residues aspartate 82, asparagine 114, glycine 141, serine 142, threonine 181, threonine 182, threonine 190, phenylalanine 192, lysine 203, and glycine 225 each coordinate NAD(+). Fe(2+) is bound by residues aspartate 237, histidine 241, and histidine 306. Histidine 310 and histidine 320 together coordinate NAD(+). Residue histidine 320 coordinates Fe(2+).

Belongs to the iron-containing alcohol dehydrogenase family. Requires Zn(2+) as cofactor.

Its subcellular location is the mitochondrion matrix. The enzyme catalyses a primary alcohol + NAD(+) = an aldehyde + NADH + H(+). It catalyses the reaction a secondary alcohol + NAD(+) = a ketone + NADH + H(+). The catalysed reaction is ethanol + NAD(+) = acetaldehyde + NADH + H(+). Functionally, involved in ethanol oxidation in mitochondria. The protein is Alcohol dehydrogenase 4 (adh4) of Schizosaccharomyces pombe (strain 972 / ATCC 24843) (Fission yeast).